A 102-amino-acid chain; its full sequence is Protein translation factor SUI1 homolog (102 aa).

It belongs to the SUI1 family.

The sequence is that of Protein translation factor SUI1 homolog from Methanococcus vannielii.